The following is a 434-amino-acid chain: Adenylosuccinate synthetase (434 aa).

Residues 13 to 19 and 41 to 43 each bind GTP; these read GDEGKGK and GHT. Asp-14 (proton acceptor) is an active-site residue. The Mg(2+) site is built by Asp-14 and Gly-41. Residues 14–17, 39–42, Thr-133, Arg-147, Gln-228, Thr-243, and Arg-307 contribute to the IMP site; these read DEGK and NAGH. His-42 functions as the Proton donor in the catalytic mechanism. 303 to 309 contacts substrate; the sequence is STTGRKR. GTP contacts are provided by residues Arg-309, 335 to 337, and 417 to 419; these read KID and STG.

The protein belongs to the adenylosuccinate synthetase family. As to quaternary structure, homodimer. Mg(2+) is required as a cofactor.

It is found in the cytoplasm. It carries out the reaction IMP + L-aspartate + GTP = N(6)-(1,2-dicarboxyethyl)-AMP + GDP + phosphate + 2 H(+). It functions in the pathway purine metabolism; AMP biosynthesis via de novo pathway; AMP from IMP: step 1/2. Functionally, plays an important role in the de novo pathway of purine nucleotide biosynthesis. Catalyzes the first committed step in the biosynthesis of AMP from IMP. The protein is Adenylosuccinate synthetase of Wigglesworthia glossinidia brevipalpis.